Consider the following 1517-residue polypeptide: DNA-directed RNA polymerase subunit beta' (1517 aa).

Zn(2+) is bound by residues Cys71, Cys73, Cys86, and Cys89. Mg(2+) is bound by residues Asp482, Asp484, and Asp486. Cys812, Cys886, Cys893, and Cys896 together coordinate Zn(2+).

It belongs to the RNA polymerase beta' chain family. In terms of assembly, the RNAP catalytic core consists of 2 alpha, 1 beta, 1 beta' and 1 omega subunit. When a sigma factor is associated with the core the holoenzyme is formed, which can initiate transcription. Requires Mg(2+) as cofactor. Zn(2+) is required as a cofactor.

It carries out the reaction RNA(n) + a ribonucleoside 5'-triphosphate = RNA(n+1) + diphosphate. In terms of biological role, DNA-dependent RNA polymerase catalyzes the transcription of DNA into RNA using the four ribonucleoside triphosphates as substrates. The polypeptide is DNA-directed RNA polymerase subunit beta' (Campylobacter jejuni (strain RM1221)).